Here is a 1472-residue protein sequence, read N- to C-terminus: Gag-Pol polyprotein (1472 aa).

The N-myristoyl glycine; by host moiety is linked to residue Gly-2. The Nuclear export signal motif lies at 16–22 (FEKIRLR). Residues 26-32 (KKKYQIK) carry the Nuclear localization signal motif. 2 disordered regions span residues 115–135 (EKAA…SRNY) and 215–234 (DRTH…RDPT). Tyr-135 carries the post-translational modification Phosphotyrosine; by host. 2 CCHC-type zinc fingers span residues 390-407 (LKCF…ECKA) and 411-428 (IKCF…DCKN). The segment at 454–500 (HSWSGTNSPPNGNSLRSSKEAPPAVCREGTAPERGERTDKETEGERS) is disordered. Positions 456–469 (WSGTNSPPNGNSLR) are enriched in polar residues. Residues 483–499 (TAPERGERTDKETEGER) are compositionally biased toward basic and acidic residues. The Peptidase A2 domain maps to 524–597 (VQALLDTGAD…TPINIIGRNI (74 aa)). The active-site For protease activity; shared with dimeric partner is the Asp-529. A Reverse transcriptase domain is found at 653–843 (EGKLSRIGGE…PPWEWMGYKL (191 aa)). Asp-719, Asp-794, and Asp-795 together coordinate Mg(2+). Residues 836-844 (WEWMGYKLH) form an RT 'primer grip' region. A Tryptophan repeat motif motif is present at residues 1007-1023 (WDMWWQDYWQVSWIPEW). The RNase H type-1 domain occupies 1043 to 1166 (IKGEDVYYVD…IDKLVSKGIR (124 aa)). Asp-1052, Glu-1087, Asp-1107, and Asp-1158 together coordinate Mg(2+). The Integrase-type zinc-finger motif lies at 1172-1213 (DRIEEAQDDHAKYHNNWRSMVQEFGLPNIVAKEIVAACPKCQ). 4 residues coordinate Zn(2+): His-1181, His-1185, Cys-1209, and Cys-1212. One can recognise an Integrase catalytic domain in the interval 1223–1373 (VDASIETWQM…SSAERLVNML (151 aa)). 2 residues coordinate Mg(2+): Asp-1233 and Asp-1285. A DNA-binding region (integrase-type) is located at residues 1392-1439 (FKVYYREGRDPVWKGPARLIWKGEGAVVIKEGEDIKVVPRRKAKIIKD). The tract at residues 1440–1472 (YGERKTMDSEGSMEGVREANKQMEGDSDLQDQE) is disordered. Residues 1454–1463 (GVREANKQME) show a composition bias toward basic and acidic residues.

Homotrimer. Interacts with gp41 (via C-terminus). As to quaternary structure, homodimer. The active site consists of two apposed aspartic acid residues. In terms of assembly, heterodimer of p66 RT and p51 RT (RT p66/p51). Heterodimerization of RT is essential for DNA polymerase activity. Despite the sequence identities, p66 RT and p51 RT have distinct folding. Homotetramer; may further associate as a homohexadecamer. The cofactor is Mg(2+). Post-translationally, specific enzymatic cleavages by the viral protease yield mature proteins. The protease is released by autocatalytic cleavage. The polyprotein is cleaved during and after budding, this process is termed maturation. Proteolytic cleavage of p66 RT removes the RNase H domain to yield the p51 RT subunit. In terms of processing, capsid protein p24 is phosphorylated.

The protein resides in the virion. Its subcellular location is the host nucleus. It is found in the host cytoplasm. The protein localises to the host cell membrane. The enzyme catalyses Specific for a P1 residue that is hydrophobic, and P1' variable, but often Pro.. It catalyses the reaction Endohydrolysis of RNA in RNA/DNA hybrids. Three different cleavage modes: 1. sequence-specific internal cleavage of RNA. Human immunodeficiency virus type 1 and Moloney murine leukemia virus enzymes prefer to cleave the RNA strand one nucleotide away from the RNA-DNA junction. 2. RNA 5'-end directed cleavage 13-19 nucleotides from the RNA end. 3. DNA 3'-end directed cleavage 15-20 nucleotides away from the primer terminus.. The catalysed reaction is 3'-end directed exonucleolytic cleavage of viral RNA-DNA hybrid.. It carries out the reaction DNA(n) + a 2'-deoxyribonucleoside 5'-triphosphate = DNA(n+1) + diphosphate. The viral protease is inhibited by many synthetic protease inhibitors (PIs), such as amprenavir, atazanavir, indinavir, loprinavir, nelfinavir, ritonavir and saquinavir. RT can be inhibited either by nucleoside RT inhibitors (NRTIs) or by non nucleoside RT inhibitors (NNRTIs). NRTIs act as chain terminators, whereas NNRTIs inhibit DNA polymerization by binding a small hydrophobic pocket near the RT active site and inducing an allosteric change in this region. Classical NRTIs are abacavir, adefovir (PMEA), didanosine (ddI), lamivudine (3TC), stavudine (d4T), tenofovir (PMPA), zalcitabine (ddC), and zidovudine (AZT). Classical NNRTIs are atevirdine (BHAP U-87201E), delavirdine, efavirenz (DMP-266), emivirine (I-EBU), and nevirapine (BI-RG-587). The tritherapies used as a basic effective treatment of AIDS associate two NRTIs and one NNRTI. Use of protease inhibitors in tritherapy regimens permit more ambitious therapeutic strategies. Functionally, gag-Pol polyprotein and Gag polyprotein may regulate their own translation, by the binding genomic RNA in the 5'-UTR. At low concentration, Gag-Pol and Gag would promote translation, whereas at high concentration, the polyproteins encapsidate genomic RNA and then shut off translation. Its function is as follows. Matrix protein p17 has two main functions: in infected cell, it targets Gag and Gag-pol polyproteins to the plasma membrane via a multipartite membrane-binding signal, that includes its myristointegration complex. The myristoylation signal and the NLS exert conflicting influences its subcellular localization. The key regulation of these motifs might be phosphorylation of a portion of MA molecules on the C-terminal tyrosine at the time of virus maturation, by virion-associated cellular tyrosine kinase. Implicated in the release from host cell mediated by Vpu. Capsid protein p24 forms the conical core that encapsulates the genomic RNA-nucleocapsid complex in the virion. The core is constituted by capsid protein hexamer subunits. The core is disassembled soon after virion entry. Interaction with host PPIA/CYPA protects the virus from restriction by host TRIM5-alpha and from an unknown antiviral activity in host cells. This capsid restriction by TRIM5 is one of the factors which restricts SIV to the simian species. In terms of biological role, nucleocapsid protein p7 encapsulates and protects viral dimeric unspliced (genomic) RNA. Binds these RNAs through its zinc fingers. Facilitates rearangement of nucleic acid secondary structure during retrotranscription of genomic RNA. This capability is referred to as nucleic acid chaperone activity. Functionally, the aspartyl protease mediates proteolytic cleavages of Gag and Gag-Pol polyproteins during or shortly after the release of the virion from the plasma membrane. Cleavages take place as an ordered, step-wise cascade to yield mature proteins. This process is called maturation. Displays maximal activity during the budding process just prior to particle release from the cell. Also cleaves Nef and Vif, probably concomitantly with viral structural proteins on maturation of virus particles. Hydrolyzes host EIF4GI and PABP1 in order to shut off the capped cellular mRNA translation. The resulting inhibition of cellular protein synthesis serves to ensure maximal viral gene expression and to evade host immune response. Its function is as follows. Reverse transcriptase/ribonuclease H (RT) is a multifunctional enzyme that converts the viral dimeric RNA genome into dsDNA in the cytoplasm, shortly after virus entry into the cell. This enzyme displays a DNA polymerase activity that can copy either DNA or RNA templates, and a ribonuclease H (RNase H) activity that cleaves the RNA strand of RNA-DNA heteroduplexes in a partially processive 3' to 5' endonucleasic mode. Conversion of viral genomic RNA into dsDNA requires many steps. A tRNA binds to the primer-binding site (PBS) situated at the 5'-end of the viral RNA. RT uses the 3' end of the tRNA primer to perform a short round of RNA-dependent minus-strand DNA synthesis. The reading proceeds through the U5 region and ends after the repeated (R) region which is present at both ends of viral RNA. The portion of the RNA-DNA heteroduplex is digested by the RNase H, resulting in a ssDNA product attached to the tRNA primer. This ssDNA/tRNA hybridizes with the identical R region situated at the 3' end of viral RNA. This template exchange, known as minus-strand DNA strong stop transfer, can be either intra- or intermolecular. RT uses the 3' end of this newly synthesized short ssDNA to perform the RNA-dependent minus-strand DNA synthesis of the whole template. RNase H digests the RNA template except for two polypurine tracts (PPTs) situated at the 5'-end and near the center of the genome. It is not clear if both polymerase and RNase H activities are simultaneous. RNase H can probably proceed both in a polymerase-dependent (RNA cut into small fragments by the same RT performing DNA synthesis) and a polymerase-independent mode (cleavage of remaining RNA fragments by free RTs). Secondly, RT performs DNA-directed plus-strand DNA synthesis using the PPTs that have not been removed by RNase H as primers. PPTs and tRNA primers are then removed by RNase H. The 3' and 5' ssDNA PBS regions hybridize to form a circular dsDNA intermediate. Strand displacement synthesis by RT to the PBS and PPT ends produces a blunt ended, linear dsDNA copy of the viral genome that includes long terminal repeats (LTRs) at both ends. Integrase catalyzes viral DNA integration into the host chromosome, by performing a series of DNA cutting and joining reactions. This enzyme activity takes place after virion entry into a cell and reverse transcription of the RNA genome in dsDNA. The first step in the integration process is 3' processing. This step requires a complex comprising the viral genome, matrix protein, Vpr and integrase. This complex is called the pre-integration complex (PIC). The integrase protein removes 2 nucleotides from each 3' end of the viral DNA, leaving recessed CA OH's at the 3' ends. In the second step, the PIC enters cell nucleus. This process is mediated through integrase and Vpr proteins, and allows the virus to infect a non dividing cell. This ability to enter the nucleus is specific of lentiviruses, other retroviruses cannot and rely on cell division to access cell chromosomes. In the third step, termed strand transfer, the integrase protein joins the previously processed 3' ends to the 5' ends of strands of target cellular DNA at the site of integration. The 5'-ends are produced by integrase-catalyzed staggered cuts, 5 bp apart. A Y-shaped, gapped, recombination intermediate results, with the 5'-ends of the viral DNA strands and the 3' ends of target DNA strands remaining unjoined, flanking a gap of 5 bp. The last step is viral DNA integration into host chromosome. This involves host DNA repair synthesis in which the 5 bp gaps between the unjoined strands are filled in and then ligated. Since this process occurs at both cuts flanking the SIV genome, a 5 bp duplication of host DNA is produced at the ends of SIV integration. Alternatively, Integrase may catalyze the excision of viral DNA just after strand transfer, this is termed disintegration. This Simian immunodeficiency virus agm.grivet (isolate AGM gr-1) (SIV-agm.gri) protein is Gag-Pol polyprotein (gag-pol).